The following is a 254-amino-acid chain: Geranylgeranylglyceryl phosphate synthase (254 aa).

Positions 28 and 53 each coordinate Mg(2+). Sn-glycerol 1-phosphate-binding positions include 172 to 178 (YLEAGSG), 203 to 204 (GG), and 225 to 226 (GT).

Belongs to the GGGP/HepGP synthase family. Group II subfamily. Mg(2+) is required as a cofactor.

It localises to the cytoplasm. It carries out the reaction sn-glycerol 1-phosphate + (2E,6E,10E)-geranylgeranyl diphosphate = sn-3-O-(geranylgeranyl)glycerol 1-phosphate + diphosphate. The protein operates within membrane lipid metabolism; glycerophospholipid metabolism. Functionally, prenyltransferase that catalyzes the transfer of the geranylgeranyl moiety of geranylgeranyl diphosphate (GGPP) to the C3 hydroxyl of sn-glycerol-1-phosphate (G1P). This reaction is the first ether-bond-formation step in the biosynthesis of archaeal membrane lipids. The sequence is that of Geranylgeranylglyceryl phosphate synthase from Methanococcus vannielii (strain ATCC 35089 / DSM 1224 / JCM 13029 / OCM 148 / SB).